A 426-amino-acid polypeptide reads, in one-letter code: MTQMTDAKSGITTEEMKFVAKEEGMDVETLKNLIAKGYVVIPKNVNRNTKPVGIGDNLRTKVNVNLGTSPDFIDIACELKKVEISNKYGADAIMDLSTGGNLPEIRKEIIKNTNLPIGTVPIYEVGADAKAKYGRVIDMDEDLIFNVIERQAKEGVDFMTLHCGITKQTVSVLNNDPRKMGVVSRGGAFLTAYIMYHDKENPLYKEFDYLLELLKEHDVTLSLGDGMRPGCLQDNTDRAQIQELITLGELVDKCREKGVQVMVEGPGHVPYNNIEANMKIQKTVCKNAPFYVLGPIVTDLAPGYDHITAAIGGTLAAVSGANFLCYVTPAEHVRLMKEDDVKEGLIASKIAAQAADVAKGHELAWKLEKKMADARMKHDWKKQFEIALDSDKPRKMREEIPSKDEKACSVCGDYCALLMVEELGKR.

Substrate is bound by residues N65, M94, Y123, H162, 184-186, 225-228, and E264; these read SRG and DGMR. Residue H268 coordinates Zn(2+). Substrate is bound at residue Y291. H332 contacts Zn(2+). [4Fe-4S] cluster is bound by residues C408, C411, and C415.

The protein belongs to the ThiC family. [4Fe-4S] cluster is required as a cofactor.

It catalyses the reaction 5-amino-1-(5-phospho-beta-D-ribosyl)imidazole + S-adenosyl-L-methionine = 4-amino-2-methyl-5-(phosphooxymethyl)pyrimidine + CO + 5'-deoxyadenosine + formate + L-methionine + 3 H(+). The protein operates within cofactor biosynthesis; thiamine diphosphate biosynthesis. Functionally, catalyzes the synthesis of the hydroxymethylpyrimidine phosphate (HMP-P) moiety of thiamine from aminoimidazole ribotide (AIR) in a radical S-adenosyl-L-methionine (SAM)-dependent reaction. The sequence is that of Phosphomethylpyrimidine synthase from Methanococcus maripaludis (strain C6 / ATCC BAA-1332).